The following is a 159-amino-acid chain: MAKSKNHTTHNQSRKWHRNGIKKPRSQRYESLKGVDPKFLRNMRFAKKHNKKGLKKMQANNAKAMSARAEAIKALVKPKEVKPKIPKGVSRKLDRLAYIAHPKLGKRARARIAKGLRLCRPKAKAKAKAKDQTKAQAAAPASVPAQAPKRTQAPTKASE.

The span at 1-26 shows a compositional bias: basic residues; sequence MAKSKNHTTHNQSRKWHRNGIKKPRS. A disordered region spans residues 1–32; the sequence is MAKSKNHTTHNQSRKWHRNGIKKPRSQRYESL. N6-methyllysine is present on Lys5. Ser31 is modified (phosphoserine). Lys33 carries the N6-acetyllysine modification. The span at 117–127 shows a compositional bias: basic residues; the sequence is RLCRPKAKAKA. The segment at 117-159 is disordered; the sequence is RLCRPKAKAKAKAKDQTKAQAAAPASVPAQAPKRTQAPTKASE. Low complexity predominate over residues 134–149; that stretch reads KAQAAAPASVPAQAPK. A Phosphoserine modification is found at Ser142.

This sequence belongs to the eukaryotic ribosomal protein eL29 family. Component of the large ribosomal subunit.

It localises to the cytoplasm. Its function is as follows. Component of the large ribosomal subunit. The ribosome is a large ribonucleoprotein complex responsible for the synthesis of proteins in the cell. The sequence is that of Large ribosomal subunit protein eL29 (RPL29) from Homo sapiens (Human).